Consider the following 163-residue polypeptide: Nucleotide-binding protein DvMF_3058 (163 aa).

It belongs to the YajQ family.

In terms of biological role, nucleotide-binding protein. This chain is Nucleotide-binding protein DvMF_3058, found in Nitratidesulfovibrio vulgaris (strain DSM 19637 / Miyazaki F) (Desulfovibrio vulgaris).